Consider the following 451-residue polypeptide: Proline--tRNA ligase (451 aa).

It belongs to the class-II aminoacyl-tRNA synthetase family. ProS type 2 subfamily. Homodimer.

The protein localises to the cytoplasm. The enzyme catalyses tRNA(Pro) + L-proline + ATP = L-prolyl-tRNA(Pro) + AMP + diphosphate. Functionally, catalyzes the attachment of proline to tRNA(Pro) in a two-step reaction: proline is first activated by ATP to form Pro-AMP and then transferred to the acceptor end of tRNA(Pro). This Ruegeria sp. (strain TM1040) (Silicibacter sp.) protein is Proline--tRNA ligase.